The chain runs to 419 residues: Glutamyl-tRNA reductase (419 aa).

Substrate-binding positions include 50–53 (TCNR), S108, 113–115 (ETQ), and Q119. C51 (nucleophile) is an active-site residue. NADP(+) is bound at residue 188-193 (GAGEMI).

Belongs to the glutamyl-tRNA reductase family. Homodimer.

It catalyses the reaction (S)-4-amino-5-oxopentanoate + tRNA(Glu) + NADP(+) = L-glutamyl-tRNA(Glu) + NADPH + H(+). Its pathway is porphyrin-containing compound metabolism; protoporphyrin-IX biosynthesis; 5-aminolevulinate from L-glutamyl-tRNA(Glu): step 1/2. Functionally, catalyzes the NADPH-dependent reduction of glutamyl-tRNA(Glu) to glutamate 1-semialdehyde (GSA). This Albidiferax ferrireducens (strain ATCC BAA-621 / DSM 15236 / T118) (Rhodoferax ferrireducens) protein is Glutamyl-tRNA reductase.